We begin with the raw amino-acid sequence, 652 residues long: MSNFSSRKKSPTGNDLKSARGAELRQQGFQDVNKRRAFLQDNSWIKKPPEEEQDGNYGRVVLNRHNSHDALDRKLIERDEPKATISRYRSEDMLDRTLSSFRTPQSTKTPAVSSFNANTTATASTPATTPVKKKRQSWFPPPPPGHNASPSTAASRRDPALHPPLPPKPCSPIASPKPLGRTNRQIHAATAGACGETERHAERNIRTEDLDDIIRVAAALQKTDKGEELDNLIRMNKSLNRNQGLDGLFRANLKAQQLDKRAQSLESLIYMNTQTDRDGKGNQAFGSLKKINQRADPDRRSQDLRSVIRTHATAERIGRRKQDLDGLIKVNPDTNKNMKRGKSLDNLIKVTPEVNRSNKGGPSLDNFTKGVPARSRANQRDQDLDSLIKVTPSANRSSQHSLDELINTSPQTIKTTARHQDLDKFIKVNPDVLTNNQRNHDVDSTIRGNPTGTRCEQSEELDNLIKVKPSALRNTNGGQDLESLTEVNSHVAEKNGRIDGQANGLTNSLFKESTRASVYSYEARNSLSSNSGNKNGGPKDTVVYTRTYVENSKSPKDGYQENISGKYIQTVYSTSDRSVIERDMCTYCRKPLGVETKMILDELQICCHSTCFKCEICKRPLENLQAGDSIWIYRQTIHCEPCYSKVMAKWIQ.

Basic residues predominate over residues 1–10 (MSNFSSRKKS). Disordered regions lie at residues 1–29 (MSNFSSRKKSPTGNDLKSARGAELRQQGF) and 43–180 (SWIK…KPLG). A compositionally biased stretch (basic and acidic residues) spans 66 to 95 (NSHDALDRKLIERDEPKATISRYRSEDMLD). Lys-82 carries the N6-acetyllysine modification. A compositionally biased stretch (polar residues) spans 97–110 (TLSSFRTPQSTKTP). The segment covering 111-130 (AVSSFNANTTATASTPATTP) has biased composition (low complexity). Residues 161 to 170 (LHPPLPPKPC) show a composition bias toward pro residues. 15 tandem repeats follow at residues 207–226 (TEDLDDIIRVAAALQKTDKG), 227–241 (EELDNLIRMNKSLNR), 242–261 (NQGLDGLFRANLKAQQLDKR), 262–281 (AQSLESLIYMNTQTDRDGKG), 282–301 (NQAFGSLKKINQRADPDRRS), 302–320 (QDLRSVIRTHATAERIGRR), 321–340 (KQDLDGLIKVNPDTNKNMKR), 341–360 (GKSLDNLIKVTPEVNRSNKG), 361–380 (GPSLDNFTKGVPARSRANQR), 381–398 (DQDLDSLIKVTPSANRSS), 399–418 (QHSLDELINTSPQTIKTTAR), 419–438 (HQDLDKFIKVNPDVLTNNQR), 439–458 (NHDVDSTIRGNPTGTRCEQS), 459–477 (EELDNLIKVKPSALRNTNG), and 478–496 (GQDLESLTEVNSHVAEKNG). A 15 X approximate tandem repeats region spans residues 207-496 (TEDLDDIIRV…VNSHVAEKNG (290 aa)). Ser-264 is subject to Phosphoserine. A Phosphoserine modification is found at Ser-343. A disordered region spans residues 353–385 (EVNRSNKGGPSLDNFTKGVPARSRANQRDQDLD). Residues 436–455 (NQRNHDVDSTIRGNPTGTRC) form a disordered region. Over residues 446–455 (IRGNPTGTRC) the composition is skewed to polar residues. In terms of domain architecture, LIM zinc-binding spans 583 to 649 (DMCTYCRKPL…EPCYSKVMAK (67 aa)).

Expressed in the upper layers of stratified epithelia, including, ependyma and choroid plexus of the brain ventricles.

The protein localises to the cytoplasm. Its subcellular location is the membrane. In terms of biological role, may function in the assembly or regulation of proteins in the cornified envelope. The LIM domain may be involved in homotypic or heterotypic associations and may function to localize sciellin to the cornified envelope. The chain is Sciellin (Scel) from Mus musculus (Mouse).